We begin with the raw amino-acid sequence, 492 residues long: Aspartate aminotransferase (492 aa).

The transit peptide at 1 to 66 directs the protein to the chloroplast; that stretch reads MMSASFKCPV…KGSCCLFNIR (66 aa). 3 residues coordinate L-aspartate: Gly119, Trp206, and Asn256. Residue Lys319 is modified to N6-(pyridoxal phosphate)lysine. Arg458 lines the L-aspartate pocket.

The protein belongs to the class-I pyridoxal-phosphate-dependent aminotransferase family. Homodimer. Requires pyridoxal 5'-phosphate as cofactor.

The protein localises to the plastid. The protein resides in the chloroplast. It catalyses the reaction L-aspartate + 2-oxoglutarate = oxaloacetate + L-glutamate. In terms of biological role, prokaryotic-type aspartate aminotransferase. Specific for aspartate and no activity with glutamine, asparagine, alanine, histidine, leucine, methionine, lysine, arginine, tryptophan, tyrosine, phenylalanine or kynurenine. This chain is Aspartate aminotransferase (AAT), found in Pinus pinaster (Maritime pine).